A 119-amino-acid chain; its full sequence is MVYIQNTHLNDKKQIYQACAQIYGLGHHHCLQICDVLGVSPETRLGMLSTGQHTLLAQIITQNYDTGSDVRRFTRQNIQRLVNIHSYRGYRHIQGLPVRGQRSHGNARTVRKLKNVIKI.

This sequence belongs to the universal ribosomal protein uS13 family. Part of the small ribosomal subunit.

The protein resides in the mitochondrion. Located at the top of the head of the small subunit, it contacts several helices of the small subunit rRNA. The sequence is that of Small ribosomal subunit protein uS13m (RPS13) from Prototheca wickerhamii.